The primary structure comprises 556 residues: 2-succinyl-5-enolpyruvyl-6-hydroxy-3-cyclohexene-1-carboxylate synthase (556 aa).

It belongs to the TPP enzyme family. MenD subfamily. In terms of assembly, homodimer. Requires Mg(2+) as cofactor. It depends on Mn(2+) as a cofactor. Thiamine diphosphate is required as a cofactor.

The catalysed reaction is isochorismate + 2-oxoglutarate + H(+) = 5-enolpyruvoyl-6-hydroxy-2-succinyl-cyclohex-3-ene-1-carboxylate + CO2. The protein operates within quinol/quinone metabolism; 1,4-dihydroxy-2-naphthoate biosynthesis; 1,4-dihydroxy-2-naphthoate from chorismate: step 2/7. It participates in quinol/quinone metabolism; menaquinone biosynthesis. Its function is as follows. Catalyzes the thiamine diphosphate-dependent decarboxylation of 2-oxoglutarate and the subsequent addition of the resulting succinic semialdehyde-thiamine pyrophosphate anion to isochorismate to yield 2-succinyl-5-enolpyruvyl-6-hydroxy-3-cyclohexene-1-carboxylate (SEPHCHC). The protein is 2-succinyl-5-enolpyruvyl-6-hydroxy-3-cyclohexene-1-carboxylate synthase of Mycobacterium leprae (strain Br4923).